Here is a 75-residue protein sequence, read N- to C-terminus: Small ribosomal subunit protein bS18 (75 aa).

Belongs to the bacterial ribosomal protein bS18 family. Part of the 30S ribosomal subunit. Forms a tight heterodimer with protein bS6.

Functionally, binds as a heterodimer with protein bS6 to the central domain of the 16S rRNA, where it helps stabilize the platform of the 30S subunit. This Pseudoalteromonas atlantica (strain T6c / ATCC BAA-1087) protein is Small ribosomal subunit protein bS18.